Here is a 145-residue protein sequence, read N- to C-terminus: D-aminoacyl-tRNA deacylase (145 aa).

Residues 137 to 138 carry the Gly-cisPro motif, important for rejection of L-amino acids motif; the sequence is GP.

Belongs to the DTD family. As to quaternary structure, homodimer.

It is found in the cytoplasm. The enzyme catalyses glycyl-tRNA(Ala) + H2O = tRNA(Ala) + glycine + H(+). The catalysed reaction is a D-aminoacyl-tRNA + H2O = a tRNA + a D-alpha-amino acid + H(+). An aminoacyl-tRNA editing enzyme that deacylates mischarged D-aminoacyl-tRNAs. Also deacylates mischarged glycyl-tRNA(Ala), protecting cells against glycine mischarging by AlaRS. Acts via tRNA-based rather than protein-based catalysis; rejects L-amino acids rather than detecting D-amino acids in the active site. By recycling D-aminoacyl-tRNA to D-amino acids and free tRNA molecules, this enzyme counteracts the toxicity associated with the formation of D-aminoacyl-tRNA entities in vivo and helps enforce protein L-homochirality. This is D-aminoacyl-tRNA deacylase from Escherichia coli O7:K1 (strain IAI39 / ExPEC).